A 51-amino-acid polypeptide reads, in one-letter code: Large ribosomal subunit protein eL39 (51 aa).

Belongs to the eukaryotic ribosomal protein eL39 family.

The protein is Large ribosomal subunit protein eL39 (rpl39e) of Methanocaldococcus jannaschii (strain ATCC 43067 / DSM 2661 / JAL-1 / JCM 10045 / NBRC 100440) (Methanococcus jannaschii).